Reading from the N-terminus, the 277-residue chain is Ribosomal RNA small subunit methyltransferase A (277 aa).

Positions 26, 28, 53, 74, 101, and 123 each coordinate S-adenosyl-L-methionine.

It belongs to the class I-like SAM-binding methyltransferase superfamily. rRNA adenine N(6)-methyltransferase family. RsmA subfamily.

It is found in the cytoplasm. It carries out the reaction adenosine(1518)/adenosine(1519) in 16S rRNA + 4 S-adenosyl-L-methionine = N(6)-dimethyladenosine(1518)/N(6)-dimethyladenosine(1519) in 16S rRNA + 4 S-adenosyl-L-homocysteine + 4 H(+). Specifically dimethylates two adjacent adenosines (A1518 and A1519) in the loop of a conserved hairpin near the 3'-end of 16S rRNA in the 30S particle. May play a critical role in biogenesis of 30S subunits. The polypeptide is Ribosomal RNA small subunit methyltransferase A (Opitutus terrae (strain DSM 11246 / JCM 15787 / PB90-1)).